The chain runs to 329 residues: Ribosomal protein L11 methyltransferase (329 aa).

Positions 177, 198, 220, and 264 each coordinate S-adenosyl-L-methionine.

It belongs to the methyltransferase superfamily. PrmA family.

The protein localises to the cytoplasm. The catalysed reaction is L-lysyl-[protein] + 3 S-adenosyl-L-methionine = N(6),N(6),N(6)-trimethyl-L-lysyl-[protein] + 3 S-adenosyl-L-homocysteine + 3 H(+). Functionally, methylates ribosomal protein L11. This chain is Ribosomal protein L11 methyltransferase, found in Helicobacter pylori (strain HPAG1).